Reading from the N-terminus, the 88-residue chain is LYR motif-containing protein 2 (88 aa).

The transit peptide at 1-19 (MAASRLPPATLTLKQFMRR) directs the protein to the mitochondrion.

It belongs to the complex I LYR family.

It localises to the mitochondrion. In terms of biological role, involved in efficient integration of the N-module into mitochondrial respiratory chain complex I. This chain is LYR motif-containing protein 2 (Lyrm2), found in Rattus norvegicus (Rat).